Consider the following 149-residue polypeptide: Large ribosomal subunit protein bL9 (149 aa).

Belongs to the bacterial ribosomal protein bL9 family.

Functionally, binds to the 23S rRNA. The chain is Large ribosomal subunit protein bL9 from Helicobacter pylori (strain ATCC 700392 / 26695) (Campylobacter pylori).